A 728-amino-acid polypeptide reads, in one-letter code: E3 ubiquitin-protein ligase LNX (728 aa).

Residues 45-83 form an RING-type zinc finger; sequence CHICLQALLDPLDTPCGHTYCTLCLTNFLVEKDFCPVDR. Residues 185-188 carry the NPXY motif motif; sequence NPAY. Residues 185-220 form a disordered region; the sequence is NPAYVSSVEDGEPVANSSDSGRSNRTRARPFERSTM. Positions 186–244 are interaction with MAGEB18; the sequence is PAYVSSVEDGEPVANSSDSGRSNRTRARPFERSTMRSRSFKKINRALSALRRTKSGSVV. PDZ domains are found at residues 278–362 and 385–467; these read SIKI…VLRE and HVIL…VSRQ. Serine 445 carries the phosphoserine modification. The interval 481–500 is disordered; it reads WISNGQQSPGPGERNTASKP. PDZ domains lie at 508-593 and 638-723; these read VVSV…ALEV and DVIL…IASW.

In terms of assembly, interacts with CXADR. Interacts with MAGEB18 and MAGEF1. Interacts with the phosphotyrosine interaction domain of all isoforms of NUMB. IGSF5/JAM4 interacts with isoform 2 through the second PDZ domain, other isoforms may also interact with IGSF5/JAM4. As to expression, isoform 1 and isoform 2 are expressed in the heart. Isoform 1 is also expressed in kidney, lung and skeletal muscle while isoform 2 is also expressed in brain.

It localises to the cytoplasm. It carries out the reaction S-ubiquitinyl-[E2 ubiquitin-conjugating enzyme]-L-cysteine + [acceptor protein]-L-lysine = [E2 ubiquitin-conjugating enzyme]-L-cysteine + N(6)-ubiquitinyl-[acceptor protein]-L-lysine.. Its pathway is protein modification; protein ubiquitination. Its function is as follows. E3 ubiquitin-protein ligase that mediates ubiquitination and subsequent proteasomal degradation of NUMB. E3 ubiquitin ligases accept ubiquitin from an E2 ubiquitin-conjugating enzyme in the form of a thioester and then directly transfers the ubiquitin to targeted substrates. Mediates ubiquitination of isoform p66 and isoform p72 of NUMB, but not that of isoform p71 or isoform p65. In terms of biological role, isoform 2 provides an endocytic scaffold for IGSF5/JAM4. This Mus musculus (Mouse) protein is E3 ubiquitin-protein ligase LNX (Lnx1).